A 182-amino-acid chain; its full sequence is ATP-dependent protease subunit HslV (182 aa).

Thr-7 is an active-site residue. The Na(+) site is built by Gly-162, Cys-165, and Thr-168.

Belongs to the peptidase T1B family. HslV subfamily. In terms of assembly, a double ring-shaped homohexamer of HslV is capped on each side by a ring-shaped HslU homohexamer. The assembly of the HslU/HslV complex is dependent on binding of ATP.

It localises to the cytoplasm. The enzyme catalyses ATP-dependent cleavage of peptide bonds with broad specificity.. With respect to regulation, allosterically activated by HslU binding. Its function is as follows. Protease subunit of a proteasome-like degradation complex believed to be a general protein degrading machinery. The chain is ATP-dependent protease subunit HslV from Legionella pneumophila (strain Lens).